Reading from the N-terminus, the 496-residue chain is Solute carrier family 2, facilitated glucose transporter member 11 (496 aa).

The Cytoplasmic portion of the chain corresponds to 1 to 11 (MRALRRLIQGR). The chain crosses the membrane as a helical span at residues 12–32 (ILLLTICAAGIGGTFQFGYNL). The Extracellular segment spans residues 33–61 (SIINAPTLHIQEFTNETWQARTGEPLPDH). The N-linked (GlcNAc...) asparagine glycan is linked to N47. A helical membrane pass occupies residues 62-82 (LVLLMWSLIVSLYPLGGLFGA). Residues 83–97 (LLAGPLAITLGRKKS) are Cytoplasmic-facing. The chain crosses the membrane as a helical span at residues 98–118 (LLVNNIFVVSAAILFGFSRKA). Topologically, residues 119 to 128 (GSFEMIMLGR) are extracellular. A helical membrane pass occupies residues 129-149 (LLVGVNAGVSMNIQPMYLGES). Over 150–157 (APKELRGA) the chain is Cytoplasmic. Residues 158–178 (VAMSSAIFTALGIVMGQVVGL) form a helical membrane-spanning segment. The Extracellular portion of the chain corresponds to 179–187 (RELLGGPQA). The chain crosses the membrane as a helical span at residues 188 to 208 (WPLLLASCLVPGALQLASLPL). At 209–273 (LPESPRYLLI…LFQHRALRRQ (65 aa)) the chain is on the cytoplasmic side. The helical transmembrane segment at 274-294 (VTSLVVLGSAMELCGNDSVYA) threads the bilayer. Residues 295–311 (YASSVFRKAGVPEAKIQ) lie on the Extracellular side of the membrane. A helical transmembrane segment spans residues 312 to 332 (YAIIGTGSCELLTAVVSCVVI). The Cytoplasmic portion of the chain corresponds to 333-338 (ERVGRR). A helical transmembrane segment spans residues 339-359 (VLLIGGYSLMTCWGSIFTVAL). At 360–364 (CLQSS) the chain is on the extracellular side. Residues 365-385 (FPWTLYLAMACIFAFILSFGI) form a helical membrane-spanning segment. Over 386–408 (GPAGVTGILATELFDQMARPAAC) the chain is Cytoplasmic. The helical transmembrane segment at 409–429 (MVCGALMWIMLILVGLGFPFI) threads the bilayer. Over 430-435 (MEALSH) the chain is Extracellular. The helical transmembrane segment at 436–456 (FLYVPFLGVCVCGAIYTGLFL) threads the bilayer. The Cytoplasmic portion of the chain corresponds to 457–496 (PETKGKTFQEISKELHRLNFPRRAQGPTWRSLEVIQSTEL).

It belongs to the major facilitator superfamily. Sugar transporter (TC 2.A.1.1) family. Glucose transporter subfamily. Expressed in heart and skeletal muscle.

The protein resides in the cell membrane. It catalyses the reaction D-glucose(out) = D-glucose(in). Facilitative glucose transporter. This is Solute carrier family 2, facilitated glucose transporter member 11 from Homo sapiens (Human).